Here is a 250-residue protein sequence, read N- to C-terminus: 2,3-bisphosphoglycerate-dependent phosphoglycerate mutase (250 aa).

Residues 10–17 (RHGESVWN), 23–24 (TG), arginine 62, 89–92 (ERHY), lysine 100, 116–117 (RR), and 185–186 (GN) each bind substrate. Histidine 11 (tele-phosphohistidine intermediate) is an active-site residue. The active-site Proton donor/acceptor is glutamate 89.

This sequence belongs to the phosphoglycerate mutase family. BPG-dependent PGAM subfamily. Homodimer.

The catalysed reaction is (2R)-2-phosphoglycerate = (2R)-3-phosphoglycerate. The protein operates within carbohydrate degradation; glycolysis; pyruvate from D-glyceraldehyde 3-phosphate: step 3/5. Catalyzes the interconversion of 2-phosphoglycerate and 3-phosphoglycerate. This chain is 2,3-bisphosphoglycerate-dependent phosphoglycerate mutase, found in Proteus mirabilis (strain HI4320).